The primary structure comprises 417 residues: 1-deoxy-D-xylulose 5-phosphate reductoisomerase (417 aa).

The NADPH site is built by Thr-10, Gly-11, Ser-12, Ile-13, Gly-36, Arg-37, Asn-38, and Asn-130. Residue Lys-131 coordinates 1-deoxy-D-xylulose 5-phosphate. NADPH is bound at residue Glu-132. Asp-156 contacts Mn(2+). Residues Ser-157, Glu-158, Ser-194, and His-217 each contribute to the 1-deoxy-D-xylulose 5-phosphate site. Residue Glu-158 coordinates Mn(2+). An NADPH-binding site is contributed by Gly-223. Residues Ser-230, Asn-235, Lys-236, and Glu-239 each coordinate 1-deoxy-D-xylulose 5-phosphate. Position 239 (Glu-239) interacts with Mn(2+).

This sequence belongs to the DXR family. Mg(2+) is required as a cofactor. The cofactor is Mn(2+).

It carries out the reaction 2-C-methyl-D-erythritol 4-phosphate + NADP(+) = 1-deoxy-D-xylulose 5-phosphate + NADPH + H(+). Its pathway is isoprenoid biosynthesis; isopentenyl diphosphate biosynthesis via DXP pathway; isopentenyl diphosphate from 1-deoxy-D-xylulose 5-phosphate: step 1/6. Functionally, catalyzes the NADPH-dependent rearrangement and reduction of 1-deoxy-D-xylulose-5-phosphate (DXP) to 2-C-methyl-D-erythritol 4-phosphate (MEP). This is 1-deoxy-D-xylulose 5-phosphate reductoisomerase from Synechococcus sp. (strain CC9902).